The sequence spans 156 residues: Small ribosomal subunit protein uS7 (156 aa).

Belongs to the universal ribosomal protein uS7 family. Part of the 30S ribosomal subunit. Contacts proteins S9 and S11.

In terms of biological role, one of the primary rRNA binding proteins, it binds directly to 16S rRNA where it nucleates assembly of the head domain of the 30S subunit. Is located at the subunit interface close to the decoding center, probably blocks exit of the E-site tRNA. The protein is Small ribosomal subunit protein uS7 of Frankia alni (strain DSM 45986 / CECT 9034 / ACN14a).